The chain runs to 254 residues: MYTVKQIKELIEKHSQDESYIHELVKDDKRKSAQKLIEKWHKEREKQQQLHAAWHEMLQFENNAKAQGYTCIAGIDEAGRGPLAGPVVAAAVILKDDTVLLGLNDSKQLSEKKRLAYYDLIQKEALDIGIGIVDAATIDEINIYEASRLAMVRAVEQLAHTPDYLLIDAMTLPLPIHQENIIKGDAKSASIAAGACIAKVTRDQMMEEYGRQYPEYQFEKHKGYGTKEHLAAIQTHGAAPIHRLSFAPVKSVIS.

The RNase H type-2 domain occupies 70–254; it reads TCIAGIDEAG…SFAPVKSVIS (185 aa). A divalent metal cation contacts are provided by D76, E77, and D168.

The protein belongs to the RNase HII family. Requires Mn(2+) as cofactor. It depends on Mg(2+) as a cofactor.

The protein localises to the cytoplasm. It carries out the reaction Endonucleolytic cleavage to 5'-phosphomonoester.. Functionally, endonuclease that specifically degrades the RNA of RNA-DNA hybrids. The polypeptide is Ribonuclease HII (Bacillus pumilus (strain SAFR-032)).